The primary structure comprises 214 residues: Endosomal/vacuolar adapter protein YPT35 (214 aa).

The tract at residues 1-63 (MNDKISFLPP…ATITRTRPRR (63 aa)) is disordered. A PxP motif is present at residues 5–15 (ISFLPPEPIQL). Over residues 16–31 (LDEDSTEPELDIDSQQ) the composition is skewed to acidic residues. Residues 38 to 58 (SASNSNDSTSHSNDCGATITR) are compositionally biased toward low complexity. Serine 65 and serine 66 each carry phosphoserine. Residues 73–213 (FQKAHVSDCT…IQFLEPSKRV (141 aa)) form the PX domain.

It belongs to the YPT35 family. Interacts with RBD2, YIF1, YIP1 and YIP4.

The protein resides in the endosome membrane. The protein localises to the vacuole membrane. Recruits the lipid transfer protein VPS13 to endosomal and vacuolar membranes. The chain is Endosomal/vacuolar adapter protein YPT35 (YPT35) from Saccharomyces cerevisiae (strain YJM789) (Baker's yeast).